We begin with the raw amino-acid sequence, 868 residues long: Transcription factor pynR (868 aa).

A DNA-binding region (zn(2)-C6 fungal-type) is located at residues 11–37; the sequence is CTFCRTRKIACSGERICNACRSRSIEC. Disordered stretches follow at residues 51-88, 662-683, 715-761, and 829-868; these read NKTT…TSAV, LSGS…LDLS, SGIP…ASDL, and GMGE…GMSN. Low complexity-rich tracts occupy residues 663–683 and 715–727; these read SGSR…LDLS and SGIP…SISH.

The protein resides in the nucleus. Its function is as follows. Transcription factor that regulates the expression of the gene cluster that mediates the biosynthesis of pyranonigrins, a family of antioxidative compounds. In Aspergillus niger (strain ATCC MYA-4892 / CBS 513.88 / FGSC A1513), this protein is Transcription factor pynR.